A 237-amino-acid polypeptide reads, in one-letter code: MAREECKALLDALNKTTACYHHLVLTVGGSADTQDLREELQKTRQKARELAVATGARLTVALRDRSLATEERAEFERLWVAFSGCLDLLEADMQRALALGATFPLHAPRRPLVRTGVTGGSSAVAARALSARSLRHEAESDFDVADLPQLEREVLQVGEMIDDMEMKVNVPRWTVQARQAAGAELLSGASAGASSAGGISVEERAGPCDPSKALAATVFSAVLLVAVALALCVAKLS.

Residues 1–212 (MAREECKALL…ERAGPCDPSK (212 aa)) lie on the Cytoplasmic side of the membrane. Residues 30-54 (SADTQDLREELQKTRQKARELAVAT) adopt a coiled-coil conformation. An SNARE-like region spans residues 153-202 (EVLQVGEMIDDMEMKVNVPRWTVQARQAAGAELLSGASAGASSAGGISVE). Residues 213–233 (ALAATVFSAVLLVAVALALCV) form a helical; Anchor for type IV membrane protein membrane-spanning segment. Residues 234–237 (AKLS) lie on the Extracellular side of the membrane.

Belongs to the RGS7BP/RGS9BP family. As to quaternary structure, specifically interacts with isoform RGS9-1 of RGS9. Interaction is decreased when RGS9-1 is phosphorylated at 'Ser-475'. Component of the RGS9-1-Gbeta5 complex composed of RGS9-1, Gbeta5 (GNB5) and RGS9BP. As to expression, predominantly expressed in photoreceptors of the retina. Weakly expressed in other areas of the central nervous system.

Its subcellular location is the membrane. In terms of biological role, regulator of G protein-coupled receptor (GPCR) signaling in phototransduction. Participates in the recovery phase of visual transduction via its interaction with RGS9-1 isoform. Acts as a membrane-anchor that mediates the targeting of RGS9-1 to the photoreceptor outer segment, where phototransduction takes place. Enhances the ability of RGS9-1 to stimulate G protein GTPase activity, allowing the visual signal to be terminated on the physiologically time scale. It also controls the proteolytic stability of RGS9-1, probably by protecting it from degradation. This Mus musculus (Mouse) protein is Regulator of G-protein signaling 9-binding protein (Rgs9bp).